Reading from the N-terminus, the 128-residue chain is uncharacterized protein (128 aa).

This is an uncharacterized protein from Mycoplasma genitalium (strain ATCC 33530 / DSM 19775 / NCTC 10195 / G37) (Mycoplasmoides genitalium).